We begin with the raw amino-acid sequence, 876 residues long: SED5-binding protein 2 (876 aa).

At serine 51 the chain carries Phosphoserine. Positions 164-189 (CRRCRSYMNPFVVFINQGRKWQCNIC) are zinc finger-like. Residues 300-324 (VSDEDDEESDGEEEDEDEEEEDVDN) are compositionally biased toward acidic residues. Residues 300–326 (VSDEDDEESDGEEEDEDEEEEDVDNSE) form a disordered region.

It belongs to the SEC23/SEC24 family. SEC24 subfamily. As to quaternary structure, COPII is composed of at least five proteins: the SEC23/24 complex, the SEC13/31 complex and SAR1. Interacts with GRH1.

It is found in the cytoplasm. The protein localises to the golgi apparatus membrane. The protein resides in the endoplasmic reticulum membrane. Component of the COPII coat, that covers ER-derived vesicles involved in transport from the endoplasmic reticulum to the Golgi apparatus. COPII acts in the cytoplasm to promote the transport of secretory, plasma membrane, and vacuolar proteins from the endoplasmic reticulum to the Golgi complex. In Saccharomyces cerevisiae (strain ATCC 204508 / S288c) (Baker's yeast), this protein is SED5-binding protein 2 (SFB2).